The sequence spans 263 residues: N-acyl homoserine lactonase AttM (263 aa).

Residues His103, His105, Asp107, His108, His180, Asp202, and His247 each contribute to the Zn(2+) site.

The protein belongs to the metallo-beta-lactamase superfamily. Zn(2+) is required as a cofactor.

The catalysed reaction is an N-acyl-L-homoserine lactone + H2O = an N-acyl-L-homoserine + H(+). This Agrobacterium fabrum (strain C58 / ATCC 33970) (Agrobacterium tumefaciens (strain C58)) protein is N-acyl homoserine lactonase AttM.